A 580-amino-acid chain; its full sequence is Mucolipin-1 (580 aa).

Positions 1–38 (MTDPAGPRGSETERLLTPNPGYGTQVGPSPAPPTPPEE) are disordered. The Cytoplasmic segment spans residues 1-65 (MTDPAGPRGS…FRAKGRKPCK (65 aa)). S10 is subject to Phosphoserine. The Dileucine motif; mediates targeting to lysosomes signature appears at 11–16 (ETERLL). The interval 42–62 (RRRLKYFFMSPCDKFRAKGRK) is interaction with phosphoinositides. A helical transmembrane segment spans residues 66-86 (LMLQVVKILVVTVQLILFGLS). The Extracellular portion of the chain corresponds to 87 to 298 (NQLAVTFREE…VFRHGDNSFR (212 aa)). The tract at residues 107-121 (LGYSDGADDTFAAYT) is extracellular/lumenal pore loop. C166 and C192 are joined by a disulfide. N230 carries N-linked (GlcNAc...) asparagine glycosylation. C253 and C284 are joined by a disulfide. Residues 299–321 (LLFDVVVILTCSLSFLLCARSLL) form a helical membrane-spanning segment. The Cytoplasmic segment spans residues 322 to 350 (RGFLLQNEFVRFMWRQRRRVISLWERLEF). Residues 351-371 (VNGWYILLVTSDVLTISGTIM) traverse the membrane as a helical segment. Residues 372 to 382 (KIGIEAKNLAS) lie on the Extracellular side of the membrane. A helical membrane pass occupies residues 383–405 (YDVCSILLGTSTLLVWVGVIRYL). At 406-427 (TFFHNYNILIATLRVALPSVMR) the chain is on the cytoplasmic side. A helical membrane pass occupies residues 428-448 (FCCCVAVIYLGYCFCGWIVLG). At 449 to 456 (PYHVKFRS) the chain is on the extracellular side. Positions 457–477 (LSMVSECLFSLINGDDMFVTF) form an intramembrane region, pore-forming. The Selectivity filter signature appears at 469–474 (NGDDMF). Over 478-491 (AAMQAQQGRSSLVW) the chain is Extracellular. Residues 492–513 (LFSQLYLYSFISLFIYMVLSLF) form a helical membrane-spanning segment. Over 514–580 (IALITGAYDT…PSEEHSLLVN (67 aa)) the chain is Cytoplasmic. 2 positions are modified to phosphoserine; by PAK: S557 and S559. The required for palmitoylation and association with membranes stretch occupies residues 565 to 567 (CCC). The Dileucine internalization motif; mediates AP2 complex-dependent internalization signature appears at 573–578 (EEHSLL).

The protein belongs to the transient receptor (TC 1.A.4) family. Polycystin subfamily. MCOLN1 sub-subfamily. Homotetramer. Homooligomer. Can heterooligomerize with MCOLN2 or MCOLN3; heteromeric assemblies have different channel properties as compared to the respective homooligomers and may be tissue-specific. Interacts with PDCD6. Interacts with TMEM163. Interacts with LAPTM4B. In terms of processing, palmitoylated; involved in association with membranes. Phosphorylation by PKA inhibits channel activity. Dephosphorylation increases activity. Post-translationally, proteolytically cleaved probably involving multiple lysosomal proteases including cathepsin B; inhibits lysosomal channel activity.

The protein localises to the late endosome membrane. It localises to the lysosome membrane. The protein resides in the cytoplasmic vesicle membrane. Its subcellular location is the cell projection. It is found in the phagocytic cup. The protein localises to the cytoplasmic vesicle. It localises to the phagosome membrane. The protein resides in the cell membrane. The catalysed reaction is Ca(2+)(in) = Ca(2+)(out). It catalyses the reaction Fe(2+)(in) = Fe(2+)(out). It carries out the reaction Mg(2+)(in) = Mg(2+)(out). The enzyme catalyses K(+)(in) = K(+)(out). The catalysed reaction is Na(+)(in) = Na(+)(out). With respect to regulation, channel activity is controlled by multiple regulatory mechanisms in different subcellular compartments. Channel function is transiently modulated by changes in Ca(2+) in a pH-dependent manner; pH changes modify the aggregation state of unitary channels; a negative cooperativity between extracellular/lumenal Ca(2+) and H(+) is suggested. Regulated by phosphoinositides in a compartment-specific manner: in lysosomes activated by PtdIns(3,5)P2 (Phosphatidylinositol 3,5-bisphosphate) and at the plasma membrane inhibited by PtdIns(4,5)P2 (Phosphatidylinositol 4,5-bisphosphate). Nonselective cation channel probably playing a role in the regulation of membrane trafficking events and of metal homeostasis. Acts as a Ca(2+)-permeable cation channel with inwardly rectifying activity. Proposed to play a major role in Ca(2+) release from late endosome and lysosome vesicles to the cytoplasm, which is important for many lysosome-dependent cellular events, including the fusion and trafficking of these organelles, exocytosis and autophagy. Required for efficient uptake of large particles in macrophages in which Ca(2+) release from the lysosomes triggers lysosomal exocytosis. May also play a role in phagosome-lysosome fusion. Involved in lactosylceramide trafficking indicative for a role in the regulation of late endocytic membrane fusion/fission events. By mediating lysosomal Ca(2+) release is involved in regulation of mTORC1 signaling and in mTOR/TFEB-dependent lysosomal adaptation to environmental cues such as nutrient levels. Seems to act as lysosomal active oxygen species (ROS) sensor involved in ROS-induced TFEB activation and autophagy. Also functions as a Fe(2+) permeable channel in late endosomes and lysosomes. Also permeable to Mg(2+), Na(+). K(+) and Cs(+). Proposed to play a role in zinc homeostasis probably implicating its association with TMEM163. In adaptive immunity, TRPML2 and TRPML1 may play redundant roles in the function of the specialized lysosomes of B cells. Functionally, may contribute to cellular lipase activity within the late endosomal pathway or at the cell surface which may be involved in processes of membrane reshaping and vesiculation, especially the growth of tubular structures. However, it is not known, whether it conveys the enzymatic activity directly, or merely facilitates the activity of an associated phospholipase. In Macaca fascicularis (Crab-eating macaque), this protein is Mucolipin-1 (MCOLN1).